Reading from the N-terminus, the 305-residue chain is tRNA pseudouridine synthase B (305 aa).

Catalysis depends on D39, which acts as the Nucleophile.

It belongs to the pseudouridine synthase TruB family. Type 1 subfamily.

It catalyses the reaction uridine(55) in tRNA = pseudouridine(55) in tRNA. In terms of biological role, responsible for synthesis of pseudouridine from uracil-55 in the psi GC loop of transfer RNAs. The protein is tRNA pseudouridine synthase B of Staphylococcus aureus (strain MRSA252).